The chain runs to 193 residues: uncharacterized protein (193 aa).

Positions Met1 to Ala26 are cleaved as a signal peptide.

This is an uncharacterized protein from Treponema pallidum (strain Nichols).